A 492-amino-acid chain; its full sequence is Fascin-2 (492 aa).

Belongs to the fascin family. As to expression, exclusively expressed in the eye, specifically in photoreceptor cells.

Its subcellular location is the cytoplasm. The protein localises to the cytoskeleton. It is found in the cell projection. The protein resides in the stereocilium. In terms of biological role, acts as an actin bundling protein. May play a pivotal role in photoreceptor cell-specific events, such as disk morphogenesis. The polypeptide is Fascin-2 (FSCN2) (Bos taurus (Bovine)).